The following is a 173-amino-acid chain: MAEKRNIFLVGPMGAGKSTIGRQLAQQLNMEFFDSDQEIERRTGADVGWVFDVEGEEGFRDREEKIINELTEKQGIVLATGGGSVKSRETRNRLSARGVVVYLETTIEKQLARTQRDKKRPLLQVESPPREVLEALADERNPLYDEIADVTIRTDDQSAKVVANQIINMLEKS.

14 to 19 (GAGKST) is an ATP binding site. Mg(2+) is bound at residue serine 18. 3 residues coordinate substrate: aspartate 36, arginine 60, and glycine 82. Residue arginine 120 coordinates ATP. Residue arginine 140 coordinates substrate. Glutamine 157 is an ATP binding site.

It belongs to the shikimate kinase family. As to quaternary structure, monomer. Mg(2+) serves as cofactor.

It localises to the cytoplasm. It carries out the reaction shikimate + ATP = 3-phosphoshikimate + ADP + H(+). It participates in metabolic intermediate biosynthesis; chorismate biosynthesis; chorismate from D-erythrose 4-phosphate and phosphoenolpyruvate: step 5/7. Catalyzes the specific phosphorylation of the 3-hydroxyl group of shikimic acid using ATP as a cosubstrate. This chain is Shikimate kinase 1, found in Erwinia tasmaniensis (strain DSM 17950 / CFBP 7177 / CIP 109463 / NCPPB 4357 / Et1/99).